The following is a 475-amino-acid chain: Divinyl ether synthase CYP74M1 (475 aa).

Heme is bound at residue cysteine 427.

This sequence belongs to the cytochrome P450 family. Heme is required as a cofactor.

The catalysed reaction is (13S)-hydroperoxy-(9Z,11E)-octadecadienoate = etheroleate + H2O. It carries out the reaction (13S)-hydroperoxy-(9Z,11E,15Z)-octadecatrienoate = etherolenate + H2O. The protein operates within lipid metabolism; oxylipin biosynthesis. In terms of biological role, divinyl ether synthase involved in oxylipin biosynthesis. Catalyzes the conversion of (13S)-hydroperoxy-(9Z,11E)-octadecadienoate (13-HPOD) to etheroleate and (13S)-hydroperoxy-(9Z,11E,15Z)-octadecatrienoate (13-HPOT) to etherolenate. Has no activity with the corresponding 9-hydroperoxides (9-HPOD and 9-HPOT). The polypeptide is Divinyl ether synthase CYP74M1 (Selaginella moellendorffii (Spikemoss)).